Reading from the N-terminus, the 124-residue chain is Ribonuclease pancreatic (124 aa).

The substrate site is built by Lys7 and Arg10. His12 functions as the Proton acceptor in the catalytic mechanism. 4 disulfide bridges follow: Cys26–Cys84, Cys40–Cys95, Cys58–Cys110, and Cys65–Cys72. N-linked (GlcNAc...) asparagine glycosylation occurs at Asn34. Substrate contacts are provided by residues 41–45 (KPVNT), Lys66, and Arg85. Catalysis depends on His119, which acts as the Proton donor.

This sequence belongs to the pancreatic ribonuclease family. In terms of assembly, monomer. Interacts with and forms tight 1:1 complexes with RNH1. Dimerization of two such complexes may occur. Interaction with RNH1 inhibits this protein. As to expression, pancreas.

The protein resides in the secreted. It carries out the reaction an [RNA] containing cytidine + H2O = an [RNA]-3'-cytidine-3'-phosphate + a 5'-hydroxy-ribonucleotide-3'-[RNA].. The catalysed reaction is an [RNA] containing uridine + H2O = an [RNA]-3'-uridine-3'-phosphate + a 5'-hydroxy-ribonucleotide-3'-[RNA].. Functionally, endonuclease that catalyzes the cleavage of RNA on the 3' side of pyrimidine nucleotides. Acts on single-stranded and double-stranded RNA. The polypeptide is Ribonuclease pancreatic (RNASE1) (Mesocricetus auratus (Golden hamster)).